The sequence spans 522 residues: F-box-like/WD repeat-containing protein TBL1Y (522 aa).

Ser-2 is modified (N-acetylserine). Positions 4 to 36 constitute a LisH domain; it reads TSDEVNFLVYRYLQESGFSHSAFTFGIESHISQ. One can recognise an F-box-like domain in the interval 41-86; sequence GTLVPPSALISILQKGLQYVEAEISINKDGTVFDSRPIESLSLIVA. Lys-102 bears the N6-acetyllysine mark. Ser-130 is subject to Phosphoserine. WD repeat units lie at residues 177 to 216, 233 to 272, 274 to 313, 316 to 354, 357 to 396, 399 to 447, 450 to 489, and 491 to 521; these read GHES…NGGS, PSNK…ASTL, QHKG…AKQQ, FHSA…PVKT, GHTN…CVHD, AHSK…CTHT, KHQE…LVHS, and QGTG…CVLD. Lys-287 is covalently cross-linked (Glycyl lysine isopeptide (Lys-Gly) (interchain with G-Cter in SUMO2)).

The protein belongs to the WD repeat EBI family. In terms of assembly, probable component of the N-Cor repressor complex and some E3 ubiquitin ligase complex. Interacts with NCOR2. In terms of tissue distribution, fetal brain and prostate. Expressed in the cochlear spiral ganglion neurons, and in outer and inner hair cells.

It localises to the nucleus. F-box-like protein involved in the recruitment of the ubiquitin/19S proteasome complex to nuclear receptor-regulated transcription units. Plays an essential role in transcription activation mediated by nuclear receptors. Probably acts as integral component of corepressor complexes that mediates the recruitment of the 19S proteasome complex, leading to the subsequent proteasomal degradation of transcription repressor complexes, thereby allowing cofactor exchange. This chain is F-box-like/WD repeat-containing protein TBL1Y (TBL1Y), found in Homo sapiens (Human).